The following is a 257-amino-acid chain: 3-deoxy-manno-octulosonate cytidylyltransferase (257 aa).

This sequence belongs to the KdsB family.

The protein localises to the cytoplasm. The catalysed reaction is 3-deoxy-alpha-D-manno-oct-2-ulosonate + CTP = CMP-3-deoxy-beta-D-manno-octulosonate + diphosphate. The protein operates within nucleotide-sugar biosynthesis; CMP-3-deoxy-D-manno-octulosonate biosynthesis; CMP-3-deoxy-D-manno-octulosonate from 3-deoxy-D-manno-octulosonate and CTP: step 1/1. It participates in bacterial outer membrane biogenesis; lipopolysaccharide biosynthesis. Its function is as follows. Activates KDO (a required 8-carbon sugar) for incorporation into bacterial lipopolysaccharide in Gram-negative bacteria. The sequence is that of 3-deoxy-manno-octulosonate cytidylyltransferase from Albidiferax ferrireducens (strain ATCC BAA-621 / DSM 15236 / T118) (Rhodoferax ferrireducens).